A 64-amino-acid chain; its full sequence is Alpha-conotoxin-like Lp1.7 (64 aa).

The signal sequence occupies residues 1 to 21 (MGMRMMFTMFLLVVLTTTVVS). Positions 22 to 41 (FNSDRESNHENRRTSNQITR) are excised as a propeptide. Cystine bridges form between Cys-47-Cys-53 and Cys-48-Cys-61. Residues 49-51 (DDP) are lacks the Ser-Xaa-Pro motif that is crucial for potent interaction with nAChR.

Belongs to the conotoxin A superfamily. In terms of tissue distribution, expressed by the venom duct.

Its subcellular location is the secreted. In terms of biological role, alpha-conotoxins act on postsynaptic membranes, they bind to the nicotinic acetylcholine receptors (nAChR) and thus inhibit them. Has possibly a distinct nAChR binding mode from other alpha-conotoxins, due to a different three residue motif (lacks the Ser-Xaa-Pro motif). The sequence is that of Alpha-conotoxin-like Lp1.7 from Conus leopardus (Leopard cone).